Here is an 802-residue protein sequence, read N- to C-terminus: Penicillin G acylase (802 aa).

Residues 1 to 26 form the signal peptide; sequence MKMKWLISVIILFVFIFPQNLVFAGE. A Ca(2+)-binding site is contributed by Glu-177. A propeptide spans 235–265 (spacer peptide); sequence SAVIKASEKVGKERENFVQSSEELGLPLKIG. Residue Ser-266 is the Nucleophile of the active site. A Ca(2+)-binding site is contributed by Asp-341.

This sequence belongs to the peptidase S45 family. Heterodimer of an alpha subunit and a beta subunit processed from the same precursor. Requires Ca(2+) as cofactor.

Its subcellular location is the secreted. It carries out the reaction a penicillin + H2O = 6-aminopenicillanate + a carboxylate. The chain is Penicillin G acylase (pac) from Rhizobium viscosum (Arthrobacter viscosus).